A 101-amino-acid polypeptide reads, in one-letter code: Ubiquitin-related modifier 1 (101 aa).

Gly101 carries the 1-thioglycine modification. Gly101 is covalently cross-linked (Glycyl lysine isopeptide (Gly-Lys) (interchain with K-? in acceptor proteins)).

The protein belongs to the URM1 family. C-terminal thiocarboxylation occurs in 2 steps, it is first acyl-adenylated (-COAMP) via the hesA/moeB/thiF part of UBA4, then thiocarboxylated (-COSH) via the rhodanese domain of UBA4.

It localises to the cytoplasm. It participates in tRNA modification; 5-methoxycarbonylmethyl-2-thiouridine-tRNA biosynthesis. Its function is as follows. Acts as a sulfur carrier required for 2-thiolation of mcm(5)S(2)U at tRNA wobble positions of cytosolic tRNA(Lys), tRNA(Glu) and tRNA(Gln). Serves as sulfur donor in tRNA 2-thiolation reaction by being thiocarboxylated (-COSH) at its C-terminus by the MOCS3 homolog UBA4. The sulfur is then transferred to tRNA to form 2-thiolation of mcm(5)S(2)U. Prior mcm(5) tRNA modification by the elongator complex is required for 2-thiolation. Also acts as a ubiquitin-like protein (UBL) that is covalently conjugated via an isopeptide bond to lysine residues of target proteins such as AHP1. The thiocarboxylated form serves as substrate for conjugation and oxidative stress specifically induces the formation of UBL-protein conjugates. The sequence is that of Ubiquitin-related modifier 1 from Scheffersomyces stipitis (strain ATCC 58785 / CBS 6054 / NBRC 10063 / NRRL Y-11545) (Yeast).